The chain runs to 249 residues: Probable septum site-determining protein MinC (249 aa).

A disordered region spans residues 115 to 144 (PTAVSPPPPPPPPPARAEPAPPAARPAPGR). Positions 118 to 139 (VSPPPPPPPPPARAEPAPPAAR) are enriched in pro residues.

The protein belongs to the MinC family. In terms of assembly, interacts with MinD and FtsZ.

Functionally, cell division inhibitor that blocks the formation of polar Z ring septums. Rapidly oscillates between the poles of the cell to destabilize FtsZ filaments that have formed before they mature into polar Z rings. Prevents FtsZ polymerization. The chain is Probable septum site-determining protein MinC from Xanthomonas axonopodis pv. citri (strain 306).